A 159-amino-acid chain; its full sequence is Lipoprotein signal peptidase (159 aa).

2 consecutive transmembrane segments (helical) span residues 59 to 79 (PMILIVSTTLILAALFLYVVF) and 87 to 107 (FLITFGLILGGGIGNGIDRIL). Catalysis depends on residues aspartate 113 and aspartate 139. Residues 131-151 (LWPVFNIADSAITIGACVLVI) form a helical membrane-spanning segment.

This sequence belongs to the peptidase A8 family.

The protein resides in the cell inner membrane. The catalysed reaction is Release of signal peptides from bacterial membrane prolipoproteins. Hydrolyzes -Xaa-Yaa-Zaa-|-(S,diacylglyceryl)Cys-, in which Xaa is hydrophobic (preferably Leu), and Yaa (Ala or Ser) and Zaa (Gly or Ala) have small, neutral side chains.. Its pathway is protein modification; lipoprotein biosynthesis (signal peptide cleavage). Its function is as follows. This protein specifically catalyzes the removal of signal peptides from prolipoproteins. This chain is Lipoprotein signal peptidase, found in Chlorobium phaeobacteroides (strain BS1).